A 453-amino-acid chain; its full sequence is Signal transduction histidine-protein kinase ArlS (453 aa).

Helical transmembrane passes span 14-34 (ITTL…IFFL) and 157-177 (FVAI…SYIF). In terms of domain architecture, HAMP spans 179–232 (TQLTKPLVTMSNKMIQIRRDGFQNKLELKTNYEETDNLIDTFNDMMYQIEESFN). Residues 240–453 (DASHELRTPL…QYTTFKIIFK (214 aa)) enclose the Histidine kinase domain. Position 243 is a phosphohistidine; by autocatalysis (histidine 243).

Autophosphorylated.

It is found in the cell membrane. It carries out the reaction ATP + protein L-histidine = ADP + protein N-phospho-L-histidine.. Its function is as follows. Member of the two-component regulatory system ArlS/ArlR. ArlS probably functions as a sensor protein kinase which is autophosphorylated at a histidine residue and transfers its phosphate group to ArlR. This is Signal transduction histidine-protein kinase ArlS (arlS) from Staphylococcus haemolyticus (strain JCSC1435).